Reading from the N-terminus, the 409-residue chain is Dihydrolipoyllysine-residue succinyltransferase component of 2-oxoglutarate dehydrogenase complex (409 aa).

One can recognise a Lipoyl-binding domain in the interval 2–77 (AIEIKAPTFP…LSNELLGKLN (76 aa)). The residue at position 43 (K43) is an N6-lipoyllysine. Positions 112–149 (ILSPAARKLAEEAGIDPNSIAGTGKGGRVTKEDVVAAV) constitute a Peripheral subunit-binding (PSBD) domain. Catalysis depends on residues H380 and D384.

This sequence belongs to the 2-oxoacid dehydrogenase family. As to quaternary structure, forms a 24-polypeptide structural core with octahedral symmetry. Part of the 2-oxoglutarate dehydrogenase (OGDH) complex composed of E1 (2-oxoglutarate dehydrogenase), E2 (dihydrolipoamide succinyltransferase) and E3 (dihydrolipoamide dehydrogenase); the complex contains multiple copies of the three enzymatic components (E1, E2 and E3). It depends on (R)-lipoate as a cofactor.

It carries out the reaction N(6)-[(R)-dihydrolipoyl]-L-lysyl-[protein] + succinyl-CoA = N(6)-[(R)-S(8)-succinyldihydrolipoyl]-L-lysyl-[protein] + CoA. The protein operates within amino-acid degradation; L-lysine degradation via saccharopine pathway; glutaryl-CoA from L-lysine: step 6/6. Its function is as follows. E2 component of the 2-oxoglutarate dehydrogenase (OGDH) complex which catalyzes the second step in the conversion of 2-oxoglutarate to succinyl-CoA and CO(2). This is Dihydrolipoyllysine-residue succinyltransferase component of 2-oxoglutarate dehydrogenase complex (sucB) from Pseudomonas aeruginosa (strain ATCC 15692 / DSM 22644 / CIP 104116 / JCM 14847 / LMG 12228 / 1C / PRS 101 / PAO1).